We begin with the raw amino-acid sequence, 418 residues long: uncharacterized protein (418 aa).

One can recognise an N-acetyltransferase domain in the interval 7–158; sequence IDVRPIAEAE…TGLDPRWSGP (152 aa). Residues 87-89 and 95-100 contribute to the acetyl-CoA site; these read VTV and RRGLLT. Tyrosine 128 serves as the catalytic Proton donor. Phenylalanine 418 functions as the Proton acceptor; via carboxylate in the catalytic mechanism.

It belongs to the acetyltransferase Eis family. As to quaternary structure, homohexamer; trimer of dimers.

This is an uncharacterized protein from Streptomyces avermitilis (strain ATCC 31267 / DSM 46492 / JCM 5070 / NBRC 14893 / NCIMB 12804 / NRRL 8165 / MA-4680).